Here is a 575-residue protein sequence, read N- to C-terminus: MAPASLLDLVSALPATESWGPAVSDETMLDGVPFAPYSKGDKLGRMADWTEGKDRERGGRQQYGNRNYRDQQVYGANQQTNPFAIQAAEEEATFSVVDNTRTSTRTRGFGRGGGTVFGRGRGQRGGQAQRGGRGTFQRVGGRGGQQYDSRGGRGGGRGGRRFGWRDDKPQRNRDASVQVKPEWTVMEEIDFSRLGKLNLDTGDGEDLENYGFLYYYDRSYDKQPGAKTSERRLNVLERAAYNVTTSSDPILQELSDKDEATVFATDNVLSMLMCATKSVYSWDLVFSRKGNKVFIDKRDGSNLDMVTVNENAADAPLEISEGNKDSINSPGALMLEATHINNVFPLQVVSESDTNKVNMTHEHPFYNEEVETDPPASKAYRYRRFDLSLEKDDEPLHLIVRTELDAVVKNNINGEDQYLTIKALNEFDNKAQGSGGALDWRSKLASQRGAVLATEMKNNSCKLARWAVQSILAKADTMKLGFVSRTNPKNNNDHVILGVLTNKPRDFASQMALNLNNGWGIVRTIVDMVLRMDEGKYVLVKDPNKSLLRLYQVPLHTFEEEDVEDMQAPNEEDEE.

Disordered regions lie at residues 36-66 (PYSKGDKLGRMADWTEGKDRERGGRQQYGNR) and 103-177 (STRT…DASV). A compositionally biased stretch (basic and acidic residues) spans 39–59 (KGDKLGRMADWTEGKDRERGG). Over residues 109–144 (FGRGGGTVFGRGRGQRGGQAQRGGRGTFQRVGGRGG) the composition is skewed to gly residues. A compositionally biased stretch (basic and acidic residues) spans 163 to 174 (GWRDDKPQRNRD). An RNA gate region spans residues 302–316 (NLDMVTVNENAADAP).

Belongs to the eIF-3 subunit D family. In terms of assembly, component of the eukaryotic translation initiation factor 3 (eIF-3) complex.

It localises to the cytoplasm. In terms of biological role, mRNA cap-binding component of the eukaryotic translation initiation factor 3 (eIF-3) complex, which is involved in protein synthesis of a specialized repertoire of mRNAs and, together with other initiation factors, stimulates binding of mRNA and methionyl-tRNAi to the 40S ribosome. The eIF-3 complex specifically targets and initiates translation of a subset of mRNAs involved in cell proliferation. In the eIF-3 complex, eif3d specifically recognizes and binds the 7-methylguanosine cap of a subset of mRNAs. In Phaeosphaeria nodorum (strain SN15 / ATCC MYA-4574 / FGSC 10173) (Glume blotch fungus), this protein is Eukaryotic translation initiation factor 3 subunit D.